Consider the following 346-residue polypeptide: Phosphoribosylformylglycinamidine cyclo-ligase (346 aa).

This sequence belongs to the AIR synthase family.

The protein localises to the cytoplasm. The enzyme catalyses 2-formamido-N(1)-(5-O-phospho-beta-D-ribosyl)acetamidine + ATP = 5-amino-1-(5-phospho-beta-D-ribosyl)imidazole + ADP + phosphate + H(+). The protein operates within purine metabolism; IMP biosynthesis via de novo pathway; 5-amino-1-(5-phospho-D-ribosyl)imidazole from N(2)-formyl-N(1)-(5-phospho-D-ribosyl)glycinamide: step 2/2. The sequence is that of Phosphoribosylformylglycinamidine cyclo-ligase from Bacillus cereus (strain ATCC 10987 / NRS 248).